We begin with the raw amino-acid sequence, 416 residues long: Gamma-glutamyl phosphate reductase (416 aa).

The protein belongs to the gamma-glutamyl phosphate reductase family.

The protein resides in the cytoplasm. It catalyses the reaction L-glutamate 5-semialdehyde + phosphate + NADP(+) = L-glutamyl 5-phosphate + NADPH + H(+). It participates in amino-acid biosynthesis; L-proline biosynthesis; L-glutamate 5-semialdehyde from L-glutamate: step 2/2. Its function is as follows. Catalyzes the NADPH-dependent reduction of L-glutamate 5-phosphate into L-glutamate 5-semialdehyde and phosphate. The product spontaneously undergoes cyclization to form 1-pyrroline-5-carboxylate. The protein is Gamma-glutamyl phosphate reductase of Streptococcus pyogenes serotype M49 (strain NZ131).